Reading from the N-terminus, the 253-residue chain is TCF3 fusion partner (253 aa).

Disordered regions lie at residues 49 to 72 and 142 to 211; these read SGGL…GRRR and DEGS…PELA. Ser-167 carries the post-translational modification Phosphoserine. Residues 170–181 are compositionally biased toward pro residues; sequence RRTPAPPEPGSP. Thr-172 is subject to Phosphothreonine. Ser-180 and Ser-188 each carry phosphoserine. Position 207 is a phosphothreonine (Thr-207). Lys-216 is covalently cross-linked (Glycyl lysine isopeptide (Lys-Gly) (interchain with G-Cter in SUMO2)). A disordered region spans residues 234–253; that stretch reads VSRGPDKLLPYPTLASPASD. 2 positions are modified to phosphoserine: Ser-249 and Ser-252.

As to quaternary structure, interacts with NOL3; translocates NOL3 into the nucleus and negatively regulated TFPT-induced cell death. Component of the chromatin remodeling INO80 complex; specifically part of a complex module associated with the N-terminus of INO80.

Its subcellular location is the nucleus. Its function is as follows. Appears to promote apoptosis in a p53/TP53-independent manner. In terms of biological role, putative regulatory component of the chromatin remodeling INO80 complex which is involved in transcriptional regulation, DNA replication and probably DNA repair. This chain is TCF3 fusion partner (TFPT), found in Homo sapiens (Human).